Here is a 357-residue protein sequence, read N- to C-terminus: Non-structural protein NS2 (357 aa).

2 disordered regions span residues 169-191 and 229-266; these read PRLQ…DEAK and DERD…HPKT. Positions 233–249 are enriched in basic and acidic residues; the sequence is EGDRDERGDEEQVKTLS. The segment covering 250 to 260 has biased composition (acidic residues); it reads DDDDQGEDASD.

Belongs to the orbivirus non-structural protein NS2 family.

Single-stranded RNA-binding protein. This is Non-structural protein NS2 (Segment-8) from Antilocapra americana (Pronghorn).